The following is a 238-amino-acid chain: Lipoarabinomannan carrier protein LprG (238 aa).

The signal sequence occupies residues 1–26 (MQAPKHHRRLFAVLATLNTATAVIAG). Residue Cys-27 is the site of N-palmitoyl cysteine attachment. Cys-27 carries the S-diacylglycerol cysteine lipid modification.

It belongs to the LppX/LprAFG lipoprotein family. Post-translationally, modified by Lgt on Cys-27 with an S-linked diacylglyceral, signal peptide is removed by LspA, Cys-27 is further modifed with a fatty acid on its amino group by Lnt yielding a triacylated protein. Probably glycosylated, which is required for T-cell activation.

It is found in the cell inner membrane. The protein localises to the secreted. It localises to the cell wall. Helps membrane protein ML0556 (P55) transport triacylglycerides (TAG) across the inner cell membrane into the periplasm and probably ultimately to the outer membrane. Binds TAG in its hydrophobic cavity and transfers it between lipid bilayers. TAG probably regulates lipid metabolism and growth regulation and plays a structural role in the outer membrane. Binds di- and triacylated phosphatidyl-myo-inositol mannosides (PIMs), and glycolipid lipoglycan modulins lipoarabinomannan (LAM) and lipomannan (LM), facilitating their recognition by TLR2. Required for activity of drug efflux transporter ML0556. Required, probably with ML0556, for normal surface localization of LAM. Its function is as follows. Constitutes a host TLR2 agonist (toll-like receptor) able to stimulate proliferation of CD4+ T-cells derived from a human leprosy patient following protein processing/presentation by MHC class II molecules in peripheral blood mononuclear cells. This Mycobacterium leprae (strain TN) protein is Lipoarabinomannan carrier protein LprG.